The following is a 222-amino-acid chain: MDMVTVTAKTVEEAVTKALIELQTTSDKLTYEIVEKGSAGFLGIGSKPAIIRAKRKETLQDKAIEFLEQVFDAMNMAVDISVEYNETEKEMNVNLKGDDMGILIGKRGQTLDSLQYLVSLVVNKSSSDYIRVKLDTENYRERRKETLETLAKNIAYKVKRTKRSVSLEPMNPYERRIIHAALQNDKYVVTRSDGEEPFRHVIISLKRENRRDRNDRSDRNEK.

The interval 2 to 51 (DMVTVTAKTVEEAVTKALIELQTTSDKLTYEIVEKGSAGFLGIGSKPAII) is jag_N domain. Positions 54–133 (KRKETLQDKA…KSSSDYIRVK (80 aa)) constitute a KH domain. Residues 138 to 204 (NYRERRKETL…EEPFRHVIIS (67 aa)) enclose the R3H domain.

This sequence belongs to the KhpB RNA-binding protein family. Forms a complex with KhpA. Homodimer or homotrimer.

It is found in the cytoplasm. Its function is as follows. A probable RNA chaperone. Forms a complex with KhpA which binds to cellular RNA and controls its expression. Plays a role in peptidoglycan (PG) homeostasis and cell length regulation. In Clostridium symbiosum (Bacteroides symbiosus), this protein is RNA-binding protein KhpB.